The primary structure comprises 164 residues: Ribosome maturation factor RimM (164 aa).

Residues 93–164 form the PRC barrel domain; that stretch reads DSEYYVANLN…FVVIVPPEFI (72 aa).

Belongs to the RimM family. As to quaternary structure, binds ribosomal protein uS19.

The protein resides in the cytoplasm. An accessory protein needed during the final step in the assembly of 30S ribosomal subunit, possibly for assembly of the head region. Essential for efficient processing of 16S rRNA. May be needed both before and after RbfA during the maturation of 16S rRNA. It has affinity for free ribosomal 30S subunits but not for 70S ribosomes. The polypeptide is Ribosome maturation factor RimM (Orientia tsutsugamushi (strain Boryong) (Rickettsia tsutsugamushi)).